The chain runs to 158 residues: MNILGIDPGSRNLGYAIVELNNSHMKLIEAGLVKIKPSEFQYQLSQMIEGLDMVFSSHSVDEVAMEDIFYAYNPQTVLKLAQFRGALALRIIQLHGNFSAYTPLQVKKALTGKAKASKEQVAFMVKKILGIKKEVKPLDITDAMAVAITHAQRLRLKR.

Active-site residues include aspartate 7, glutamate 66, and aspartate 139. The Mg(2+) site is built by aspartate 7, glutamate 66, and aspartate 139.

It belongs to the RuvC family. In terms of assembly, homodimer which binds Holliday junction (HJ) DNA. The HJ becomes 2-fold symmetrical on binding to RuvC with unstacked arms; it has a different conformation from HJ DNA in complex with RuvA. In the full resolvosome a probable DNA-RuvA(4)-RuvB(12)-RuvC(2) complex forms which resolves the HJ. Requires Mg(2+) as cofactor.

It is found in the cytoplasm. The enzyme catalyses Endonucleolytic cleavage at a junction such as a reciprocal single-stranded crossover between two homologous DNA duplexes (Holliday junction).. The RuvA-RuvB-RuvC complex processes Holliday junction (HJ) DNA during genetic recombination and DNA repair. Endonuclease that resolves HJ intermediates. Cleaves cruciform DNA by making single-stranded nicks across the HJ at symmetrical positions within the homologous arms, yielding a 5'-phosphate and a 3'-hydroxyl group; requires a central core of homology in the junction. The consensus cleavage sequence is 5'-(A/T)TT(C/G)-3'. Cleavage occurs on the 3'-side of the TT dinucleotide at the point of strand exchange. HJ branch migration catalyzed by RuvA-RuvB allows RuvC to scan DNA until it finds its consensus sequence, where it cleaves and resolves the cruciform DNA. This is Crossover junction endodeoxyribonuclease RuvC from Nitratiruptor sp. (strain SB155-2).